A 148-amino-acid polypeptide reads, in one-letter code: Protein SOB FIVE-LIKE 1 (148 aa).

Positions 1-10 are enriched in basic and acidic residues; the sequence is MESPRNHGGS. 2 disordered regions span residues 1-20 and 33-148; these read MESPRNHGGSEEEEYSSCES and NDQS…SKTK. The short motif at 20–25 is the SOFL-A element; it reads SGWTMY. Acidic residues predominate over residues 54–76; that stretch reads DGYENDDGDTSDDGGDEESDDSM. The SOFL-B motif lies at 75–84; it reads SMASDASSGP. Residues 91–101 are compositionally biased toward basic residues; it reads HINKHAARKNG. Over residues 111-128 the composition is skewed to basic and acidic residues; sequence QHTEKTISNEGEKSDLKA.

It belongs to the SOFL plant protein family. In terms of tissue distribution, predominantly expressed in the vascular tissues of seedlings, developing leaves, flowers and siliques, but barely detectable in roots and stems.

The protein localises to the cytoplasm. Its subcellular location is the nucleus. Its function is as follows. Involved in cytokinin-mediated development. Together with SOFL2, triggers the endogenous content of specific bioactive cytokinins derived from the biosynthetic intermediates trans-zeatin riboside monophosphate (tZRMP) and N(6)-(Delta(2)-isopentenyl)adenosine monophosphate (iPRMP) such as N-glucosides trans-zeatin 7-glucoside (tZ7G), cis-zeatin 7-glucoside (cZ7G) and N(6)-(Delta(2)-isopentenyl)adenine 7-glucoside (iP7G). The chain is Protein SOB FIVE-LIKE 1 from Arabidopsis thaliana (Mouse-ear cress).